The chain runs to 264 residues: Transcription factor bHLH52 (264 aa).

The 50-residue stretch at 134 to 183 folds into the bHLH domain; it reads RELSAQSIAARKRRRRITEKTQELGKLIPGSQKHNTAEMFNAAAKYVKFL.

As to quaternary structure, homodimer. Expressed constitutively in roots, leaves, stems, and flowers.

The protein localises to the nucleus. This is Transcription factor bHLH52 (BHLH52) from Arabidopsis thaliana (Mouse-ear cress).